A 380-amino-acid chain; its full sequence is Ribosomal RNA large subunit methyltransferase F (380 aa).

Residues 1–32 (MSHKTKPSTQERKAGKPSAPKRKVISKSPNSK) are disordered.

It belongs to the methyltransferase superfamily. METTL16/RlmF family.

Its subcellular location is the cytoplasm. The enzyme catalyses adenosine(1618) in 23S rRNA + S-adenosyl-L-methionine = N(6)-methyladenosine(1618) in 23S rRNA + S-adenosyl-L-homocysteine + H(+). Specifically methylates the adenine in position 1618 of 23S rRNA. In Shewanella halifaxensis (strain HAW-EB4), this protein is Ribosomal RNA large subunit methyltransferase F.